The sequence spans 369 residues: Sulfate permease 2, chloroplastic (369 aa).

Residues Met-1 to Ser-21 form a disordered region. The transit peptide at Met-1 to Ser-82 directs the protein to the chloroplast. A run of 5 helical transmembrane segments spans residues Val-110 to Val-130, Thr-156 to Ile-176, Val-187 to Met-207, Val-229 to Val-249, and Thr-335 to Ile-355. The region spanning Leu-153–Lys-356 is the ABC transmembrane type-1 domain.

It belongs to the ATP-binding cassette (ABC) (TC 3.A.1) superfamily. In terms of assembly, part of the chloroplast sulfate permease holocomplex. May form a heterodimer with SLUP1.

It is found in the plastid. The protein localises to the chloroplast membrane. Part of the ABC-type chloroplast envelope-localized sulfate transporter. This is Sulfate permease 2, chloroplastic (SULP2) from Chlamydomonas reinhardtii (Chlamydomonas smithii).